Here is a 238-residue protein sequence, read N- to C-terminus: Purine nucleoside phosphorylase DeoD-type (238 aa).

His-4 is a binding site for a purine D-ribonucleoside. Residues Gly-20, Arg-24, Arg-43, and 87–90 (RIGS) each bind phosphate. Residues 181–183 (EME) and 205–206 (SD) contribute to the a purine D-ribonucleoside site. Asp-206 serves as the catalytic Proton donor.

It belongs to the PNP/UDP phosphorylase family. Homohexamer; trimer of homodimers.

It catalyses the reaction a purine D-ribonucleoside + phosphate = a purine nucleobase + alpha-D-ribose 1-phosphate. The enzyme catalyses a purine 2'-deoxy-D-ribonucleoside + phosphate = a purine nucleobase + 2-deoxy-alpha-D-ribose 1-phosphate. Functionally, catalyzes the reversible phosphorolytic breakdown of the N-glycosidic bond in the beta-(deoxy)ribonucleoside molecules, with the formation of the corresponding free purine bases and pentose-1-phosphate. The sequence is that of Purine nucleoside phosphorylase DeoD-type from Mycoplasma genitalium (strain ATCC 33530 / DSM 19775 / NCTC 10195 / G37) (Mycoplasmoides genitalium).